Here is a 321-residue protein sequence, read N- to C-terminus: uncharacterized protein (321 aa).

The disordered stretch occupies residues 280–306; it reads NSDHINNENNTNSNNDDNSNNSNNNNE. A compositionally biased stretch (low complexity) spans 286–306; it reads NENNTNSNNDDNSNNSNNNNE.

This is an uncharacterized protein from Dictyostelium discoideum (Social amoeba).